A 239-amino-acid chain; its full sequence is ATP synthase subunit a (239 aa).

Helical transmembrane passes span phenylalanine 31 to glycine 51, valine 91 to isoleucine 111, alanine 125 to valine 145, phenylalanine 151 to isoleucine 171, isoleucine 194 to phenylalanine 214, and threonine 215 to isoleucine 235.

Belongs to the ATPase A chain family. In terms of assembly, F-type ATPases have 2 components, CF(1) - the catalytic core - and CF(0) - the membrane proton channel. CF(1) has five subunits: alpha(3), beta(3), gamma(1), delta(1), epsilon(1). CF(0) has three main subunits: a(1), b(2) and c(9-12). The alpha and beta chains form an alternating ring which encloses part of the gamma chain. CF(1) is attached to CF(0) by a central stalk formed by the gamma and epsilon chains, while a peripheral stalk is formed by the delta and b chains.

It is found in the cell inner membrane. Key component of the proton channel; it plays a direct role in the translocation of protons across the membrane. The sequence is that of ATP synthase subunit a from Syntrophobacter fumaroxidans (strain DSM 10017 / MPOB).